We begin with the raw amino-acid sequence, 69 residues long: Putative membrane protein insertion efficiency factor (69 aa).

It belongs to the UPF0161 family.

The protein localises to the cell membrane. In terms of biological role, could be involved in insertion of integral membrane proteins into the membrane. The sequence is that of Putative membrane protein insertion efficiency factor from Clostridium botulinum (strain ATCC 19397 / Type A).